A 98-amino-acid polypeptide reads, in one-letter code: SPbeta prophage-derived uncharacterized protein YorB (98 aa).

The polypeptide is SPbeta prophage-derived uncharacterized protein YorB (yorB) (Bacillus subtilis (strain 168)).